Here is a 299-residue protein sequence, read N- to C-terminus: MSNSWWEITILCHPHLEESITWRLDKFGCSGTSREIKGKSYIIQAYAPQIQYQSLDISALSLWLQQDALVLNLPQPLTRWKLIDEEDWASSWKEHWEPTEVGDRFIIYPAWLTPPEQTDKLILRLDPGVAFGTGTHPTTQLCLESLEMRLSKSPENVVIADIGSGSGILSIGAILLGAKKAYAVDIDPLAVKAARENRHLNQIHPDHLVINQGSLTELLELVSDGVDGIVCNILAEVIIELIPQFSKLARPNTWGILSGILLEQSQAIADTLEQEGWIVAALWKRKQWCCFQIRKAPEN.

T139, G163, D185, and N232 together coordinate S-adenosyl-L-methionine.

It belongs to the methyltransferase superfamily. PrmA family.

Its subcellular location is the cytoplasm. The enzyme catalyses L-lysyl-[protein] + 3 S-adenosyl-L-methionine = N(6),N(6),N(6)-trimethyl-L-lysyl-[protein] + 3 S-adenosyl-L-homocysteine + 3 H(+). Its function is as follows. Methylates ribosomal protein L11. This Crocosphaera subtropica (strain ATCC 51142 / BH68) (Cyanothece sp. (strain ATCC 51142)) protein is Ribosomal protein L11 methyltransferase.